Consider the following 181-residue polypeptide: Inner membrane-spanning protein YciB (181 aa).

The next 5 helical transmembrane spans lie at Leu10–Ile30, Met50–Asp70, Ser72–Ser92, Val118–Phe138, and Phe148–Leu168.

It belongs to the YciB family.

The protein localises to the cell inner membrane. In terms of biological role, plays a role in cell envelope biogenesis, maintenance of cell envelope integrity and membrane homeostasis. This chain is Inner membrane-spanning protein YciB, found in Shewanella pealeana (strain ATCC 700345 / ANG-SQ1).